A 390-amino-acid chain; its full sequence is Formate-dependent phosphoribosylglycinamide formyltransferase (390 aa).

Residues 18–19 and glutamate 78 each bind N(1)-(5-phospho-beta-D-ribosyl)glycinamide; that span reads EL. ATP-binding positions include arginine 110, lysine 151, 156-161, 191-194, and glutamate 199; these read SSGKGQ and EEFL. The region spanning 115 to 305 is the ATP-grasp domain; the sequence is DLASKELNIK…EFELHLRAFL (191 aa). 2 residues coordinate Mg(2+): glutamate 264 and glutamate 276. Residues aspartate 283, lysine 353, and 360-361 each bind N(1)-(5-phospho-beta-D-ribosyl)glycinamide; that span reads RR.

It belongs to the PurK/PurT family. As to quaternary structure, homodimer.

It carries out the reaction N(1)-(5-phospho-beta-D-ribosyl)glycinamide + formate + ATP = N(2)-formyl-N(1)-(5-phospho-beta-D-ribosyl)glycinamide + ADP + phosphate + H(+). Its pathway is purine metabolism; IMP biosynthesis via de novo pathway; N(2)-formyl-N(1)-(5-phospho-D-ribosyl)glycinamide from N(1)-(5-phospho-D-ribosyl)glycinamide (formate route): step 1/1. Functionally, involved in the de novo purine biosynthesis. Catalyzes the transfer of formate to 5-phospho-ribosyl-glycinamide (GAR), producing 5-phospho-ribosyl-N-formylglycinamide (FGAR). Formate is provided by PurU via hydrolysis of 10-formyl-tetrahydrofolate. This chain is Formate-dependent phosphoribosylglycinamide formyltransferase, found in Prochlorococcus marinus subsp. pastoris (strain CCMP1986 / NIES-2087 / MED4).